A 469-amino-acid chain; its full sequence is 6-phospho-beta-galactosidase (469 aa).

The D-galactose 6-phosphate site is built by Gln18, His115, Asn158, Glu159, and Asn296. Catalysis depends on Glu159, which acts as the Proton donor. Residue Glu374 is the Nucleophile of the active site. D-galactose 6-phosphate contacts are provided by Ser429, Trp430, Lys436, and Tyr438.

It belongs to the glycosyl hydrolase 1 family.

The catalysed reaction is a 6-phospho-beta-D-galactoside + H2O = D-galactose 6-phosphate + an alcohol. It participates in carbohydrate metabolism; lactose degradation; D-galactose 6-phosphate and beta-D-glucose from lactose 6-phosphate: step 1/1. This Staphylococcus haemolyticus (strain JCSC1435) protein is 6-phospho-beta-galactosidase.